Here is a 147-residue protein sequence, read N- to C-terminus: D-aminoacyl-tRNA deacylase (147 aa).

The Gly-cisPro motif, important for rejection of L-amino acids signature appears at 137–138 (GP).

Belongs to the DTD family. As to quaternary structure, homodimer.

The protein resides in the cytoplasm. The enzyme catalyses glycyl-tRNA(Ala) + H2O = tRNA(Ala) + glycine + H(+). The catalysed reaction is a D-aminoacyl-tRNA + H2O = a tRNA + a D-alpha-amino acid + H(+). In terms of biological role, an aminoacyl-tRNA editing enzyme that deacylates mischarged D-aminoacyl-tRNAs. Also deacylates mischarged glycyl-tRNA(Ala), protecting cells against glycine mischarging by AlaRS. Acts via tRNA-based rather than protein-based catalysis; rejects L-amino acids rather than detecting D-amino acids in the active site. By recycling D-aminoacyl-tRNA to D-amino acids and free tRNA molecules, this enzyme counteracts the toxicity associated with the formation of D-aminoacyl-tRNA entities in vivo and helps enforce protein L-homochirality. In Bacillus velezensis (strain DSM 23117 / BGSC 10A6 / LMG 26770 / FZB42) (Bacillus amyloliquefaciens subsp. plantarum), this protein is D-aminoacyl-tRNA deacylase.